Reading from the N-terminus, the 121-residue chain is Small ribosomal subunit protein uS13 (121 aa).

The disordered stretch occupies residues 92–121 (RRGLPVRGQKTKNNSRTRKGPRKTMANKKK).

Belongs to the universal ribosomal protein uS13 family. Part of the 30S ribosomal subunit. Forms a loose heterodimer with protein S19. Forms two bridges to the 50S subunit in the 70S ribosome.

Its function is as follows. Located at the top of the head of the 30S subunit, it contacts several helices of the 16S rRNA. In the 70S ribosome it contacts the 23S rRNA (bridge B1a) and protein L5 of the 50S subunit (bridge B1b), connecting the 2 subunits; these bridges are implicated in subunit movement. Contacts the tRNAs in the A and P-sites. This chain is Small ribosomal subunit protein uS13, found in Oceanobacillus iheyensis (strain DSM 14371 / CIP 107618 / JCM 11309 / KCTC 3954 / HTE831).